Consider the following 257-residue polypeptide: MAKVTGLPEFEDLHTKRKWMLNHMAAAFRMFGRNGYNEGTAGHVTVRDPIDENTFWINPLEVPFSLMKPSDLVHINSDGEIIGGSKMKYNTSGFAIHYEMHKVRPEVICVCHVHSIYGKAFSALGKPLDMLNTDCCVFYNNHGIYFDMDDVISMPEEGRRTAKGLADYKAVLVQNHGIMTVGTTVDEAAYLLSLMERSCQIQLLIDSATKVGERKHVHPTRAKAIRENADNPVGLYTAQQPNFLYEVACSNGELEII.

The protein localises to the cytoplasm. The protein resides in the nucleus. Functionally, has a role in meiosis. The protein is Meiotically up-regulated gene 14 protein (mug14) of Schizosaccharomyces pombe (strain 972 / ATCC 24843) (Fission yeast).